Reading from the N-terminus, the 1025-residue chain is DNA ligase 4 (1025 aa).

Residues 1–36 (MMQPTPAPSSAPGSPQRTQAEPEMETPSYPQPPQNV) are disordered. Positions 289, 291, 292, 296, 349, 387, 447, 452, 469, and 471 each coordinate ATP. Lys291 (N6-AMP-lysine intermediate) is an active-site residue. Glu349 is a binding site for Mg(2+). Residue Glu447 participates in Mg(2+) binding. The region spanning 667 to 763 (VKTDIFNGMK…EPAPFKKKYF (97 aa)) is the BRCT 1 domain. The disordered stretch occupies residues 773–904 (ADEYNEDDGE…TTPDVDGDVK (132 aa)). Composition is skewed to acidic residues over residues 775–785 (EYNEDDGEEEG) and 806–816 (SETEDEDEEQA). Positions 817 to 838 (PEIKEEQDGELHEWLKVDDRKS) are enriched in basic and acidic residues. The span at 845–870 (DEEDSVTEDDSDNADVADEEEPDLDD) shows a compositional bias: acidic residues. A compositionally biased stretch (basic and acidic residues) spans 891 to 904 (RHRETTPDVDGDVK). Positions 915 to 1025 (DPDVIFKHLC…TLLDEEGESF (111 aa)) constitute a BRCT 2 domain.

Belongs to the ATP-dependent DNA ligase family. Requires Mg(2+) as cofactor.

The protein resides in the nucleus. The enzyme catalyses ATP + (deoxyribonucleotide)n-3'-hydroxyl + 5'-phospho-(deoxyribonucleotide)m = (deoxyribonucleotide)n+m + AMP + diphosphate.. DNA ligase involved in DNA non-homologous end joining (NHEJ); required for double-strand break (DSB) repair. The sequence is that of DNA ligase 4 (LIG4) from Coprinopsis cinerea (strain Okayama-7 / 130 / ATCC MYA-4618 / FGSC 9003) (Inky cap fungus).